Consider the following 243-residue polypeptide: Biosynthetic peptidoglycan transglycosylase (243 aa).

Residues 22 to 42 traverse the membrane as a helical segment; it reads LIVLLVLALMSVLQVIVFRFV.

This sequence belongs to the glycosyltransferase 51 family.

The protein localises to the cell inner membrane. The enzyme catalyses [GlcNAc-(1-&gt;4)-Mur2Ac(oyl-L-Ala-gamma-D-Glu-L-Lys-D-Ala-D-Ala)](n)-di-trans,octa-cis-undecaprenyl diphosphate + beta-D-GlcNAc-(1-&gt;4)-Mur2Ac(oyl-L-Ala-gamma-D-Glu-L-Lys-D-Ala-D-Ala)-di-trans,octa-cis-undecaprenyl diphosphate = [GlcNAc-(1-&gt;4)-Mur2Ac(oyl-L-Ala-gamma-D-Glu-L-Lys-D-Ala-D-Ala)](n+1)-di-trans,octa-cis-undecaprenyl diphosphate + di-trans,octa-cis-undecaprenyl diphosphate + H(+). It functions in the pathway cell wall biogenesis; peptidoglycan biosynthesis. Its function is as follows. Peptidoglycan polymerase that catalyzes glycan chain elongation from lipid-linked precursors. This Xylella fastidiosa (strain 9a5c) protein is Biosynthetic peptidoglycan transglycosylase.